The chain runs to 2476 residues: Zonadhesin (2476 aa).

An N-terminal signal peptide occupies residues 1–29 (MLGLPALAGPMAMPHPPLIPSTPTLLAFS). Residues 30–2418 (FPGGFYMLLD…SPKKPEASNR (2389 aa)) are Extracellular-facing. MAM domains are found at residues 31–144 (PGGF…PCEE) and 147–312 (PQCD…TCRG). N-linked (GlcNAc...) asparagine glycans are attached at residues Asn109 and Asn269. Disordered stretches follow at residues 313–332 (PSETSVSTEKPVAPTEKPTV), 358–462 (PTVP…TERT), and 537–632 (ERTT…RTTI). A 53 X approximate heptapeptide repeats (mucin-like domain) region spans residues 319 to 687 (STEKPVAPTE…ATTVTPRTTI (369 aa)). Residues 358–373 (PTVPTEKPTIPTEKST) are compositionally biased toward low complexity. Positions 400 to 412 (TTPPEGPAVPPKG) are enriched in pro residues. The segment covering 423–433 (HTEKSTVHTEK) has biased composition (basic and acidic residues). A compositionally biased stretch (low complexity) spans 451-462 (PTKRTTTPTERT). The TIL 1 domain maps to 690-739 (CPPNAHFERCACPVSCQSPTPNCELFCKPGCVCDPGFLFSGSHCVNASSC). Asn735, Asn758, and Asn833 each carry an N-linked (GlcNAc...) asparagine glycan. In terms of domain architecture, VWFC 1 spans 740–794 (DCFYNDNYYKLGTDWFSPNCTEHCHCRPSSRMECQTFKCGTHTVCQLKNGQYGCH). Residues 799–976 (ATCSVYGDPH…TSEDADQQCE (178 aa)) form the VWFD 1 domain. Intrachain disulfides connect Cys801–Cys936 and Cys823–Cys975. Positions 943–983 (SSNDNQKPDGSPAKDEKELGSSWQTSEDADQQCEENQVSPP) are disordered. Residues 1070–1123 (CPRNSRYTLCARLCPDTCHSEFSGRACKDRCVEGCECDPGFVLSGLQCVSRSEC) form the TIL 2 domain. Residues 1124 to 1180 (GCLDSTAGYVKVGERWFKPGCRQLCICEGNNRTRCVLWRCQAQEFCGQQDGIYGCHA) enclose the VWFC 2 domain. N-linked (GlcNAc...) asparagine glycosylation is present at Asn1154. In terms of domain architecture, VWFD 2 spans 1184–1364 (ATCTVSGDPH…INELSEPGCF (181 aa)). Disulfide bonds link Cys1186–Cys1324 and Cys1208–Cys1363. Residues Asn1329 and Asn1448 are each glycosylated (N-linked (GlcNAc...) asparagine). A TIL 3 domain is found at 1456–1511 (CPSGSSYSTCANPCPATCLSLNNPSYCPSTLPCAEGCECQKGHILSGTSCVPLSQC). The VWFC 3 domain maps to 1512–1568 (GCTTQRGSYHPVGESWYTDNSCSRLCTCSAHNNISCRQASCKPSQMCWPQDGLIRCR). Asn1544, Asn1596, and Asn1654 each carry an N-linked (GlcNAc...) asparagine glycan. Residues 1573 to 1751 (GVCRIPDTSH…RDKEIDPNCQ (179 aa)) enclose the VWFD 3 domain. 2 cysteine pairs are disulfide-bonded: Cys1575–Cys1712 and Cys1597–Cys1750. A compositionally biased stretch (basic and acidic residues) spans 1747–1759 (DPNCQEDDRKTEA). A disordered region spans residues 1747-1768 (DPNCQEDDRKTEAESQEQPSAN). N-linked (GlcNAc...) asparagine glycosylation occurs at Asn1843. Positions 1851–1907 (CSAHSVYTSCVPSCLPSCQDPEGQCTGAGAPSTCEEGCICEPGYVLSEQQCVARSQC) constitute a TIL 4 domain. Residues 1908 to 1963 (GCRDARGTFLPVGRFRLSSGCSQMCVCTAGAIECRPFTCPSGSQCEPNEDGKDFCQ) form the VWFC 4 domain. N-linked (GlcNAc...) asparagine glycosylation occurs at Asn1965. Positions 1968-2145 (NLCSVFGDPH…WEVKAKEGHP (178 aa)) constitute a VWFD 4 domain. Cys1970 and Cys2107 are joined by a disulfide. N-linked (GlcNAc...) asparagine glycans are attached at residues Asn2122, Asn2165, and Asn2178. A TIL 5 domain is found at 2257–2310 (CPANTVYQSCMTPCPASCATLAVPRACDGPCVEGCASLPGYIYSGAQSLPMAHC). One can recognise a VWFC 5 domain in the interval 2311–2365 (GCTNNGVYYQQGDSFVTENCSQRCTCASSGVLLCEPLSCRPGEICTLGNLTRGCF). Residues Asn2329 and Asn2359 are each glycosylated (N-linked (GlcNAc...) asparagine). Positions 2366–2402 (RDSPCLQNPCQNDGRCREQGTHFTCECELGYGGDLCT) constitute an EGF-like domain. Cystine bridges form between Cys2370-Cys2381, Cys2375-Cys2390, and Cys2392-Cys2401. A helical membrane pass occupies residues 2419-2439 (VAILLGMLMPTVLLVPAVTRV). The interval 2438–2476 (RVSRKRRRRRRPSRERTQSQNRGKRAGTDCAPEQAYKVA) is disordered. The span at 2439-2450 (VSRKRRRRRRPS) shows a compositional bias: basic residues. The Cytoplasmic portion of the chain corresponds to 2440-2476 (SRKRRRRRRPSRERTQSQNRGKRAGTDCAPEQAYKVA).

In terms of assembly, probably forms covalent oligomers. The MAM domains and the mucin-like domains are missing from the zonadhesin that binds to the egg extracellular matrix. Processing might occur during sperm maturation and/or capacitation. In terms of tissue distribution, in testis, primarily in haploid spermatids. Not in lung, liver, heart, spleen, brain, kidney, epididymis.

It localises to the cell membrane. Its function is as follows. Binds in a species-specific manner to the zona pellucida of the egg. May be involved in gamete recognition and/or signaling. The chain is Zonadhesin (ZAN) from Sus scrofa (Pig).